A 443-amino-acid polypeptide reads, in one-letter code: Tubulin beta-1 chain (443 aa).

GTP contacts are provided by Gln-11, Glu-69, Ser-138, Gly-142, Thr-143, Gly-144, Asn-204, and Asn-226. Glu-69 contributes to the Mg(2+) binding site. Residues 424–443 (QYQDATAEREGEYEEDYDEA) form a disordered region. Residues 434-443 (GEYEEDYDEA) show a composition bias toward acidic residues.

The protein belongs to the tubulin family. In terms of assembly, dimer of alpha and beta chains. A typical microtubule is a hollow water-filled tube with an outer diameter of 25 nm and an inner diameter of 15 nM. Alpha-beta heterodimers associate head-to-tail to form protofilaments running lengthwise along the microtubule wall with the beta-tubulin subunit facing the microtubule plus end conferring a structural polarity. Microtubules usually have 13 protofilaments but different protofilament numbers can be found in some organisms and specialized cells. Mg(2+) serves as cofactor.

It is found in the cytoplasm. The protein localises to the cytoskeleton. Functionally, tubulin is the major constituent of microtubules, a cylinder consisting of laterally associated linear protofilaments composed of alpha- and beta-tubulin heterodimers. Microtubules grow by the addition of GTP-tubulin dimers to the microtubule end, where a stabilizing cap forms. Below the cap, tubulin dimers are in GDP-bound state, owing to GTPase activity of alpha-tubulin. This Anemia phyllitidis (Fern) protein is Tubulin beta-1 chain (TUBB1).